The chain runs to 344 residues: Thioredoxin reductase FGSG_00043 (344 aa).

FAD is bound by residues 12 to 15 (GGPA), 34 to 39 (DSVSYR), H51, and A121. Cysteines 165 and 168 form a disulfide. Residues D314 and 321 to 322 (FV) contribute to the FAD site.

Belongs to the class-II pyridine nucleotide-disulfide oxidoreductase family. In terms of assembly, homodimer. The cofactor is FAD.

Its pathway is mycotoxin biosynthesis. Functionally, thioredoxin reductase; part of the gene cluster that mediates the biosynthesis of gramillins A and B, bicyclic lipopeptides that induce cell death in maize leaves but not in wheat leaves. The nonribosomal peptide synthetase GRA1 incorporates respectively a glutamic adic (Glu), a leucine (Leu), a serine (Ser), a hydroxyglutamine (HOGln), a 2-amino decanoic acid, and 2 cysteins (CysB and CysA). The biosynthesis of 2-amino decanoic acid incorporated in gramillins could be initiated by a fatty acid synthase composed of the alpha and beta subunits FGSG_00036 and FGSG_11656. The cytochrome P450 monooxygenase FGSG_15680 could hydroxylate the fatty acid chain. Subsequent oxidation to the ketone by the oxidoreductase FGSG_00048 and transamination by aminotransferase FGSG_00049 could form 2-amino-decanoic acid. On the other hand, FGSG_15680 could also be responsible for the HO-modified glutamine at the gamma-position. Whether hydroxylation occurs on the fully assembled product or on the Gln residue prior to assembly into the gramillins requires further proof. The thioredoxin FGSG_00043 could also be required for the disulfide-bond formation between CysA and CysB. The specific involvement of the remaining proteins from the cluster is more difficult to discern, but could have broader regulatory (FGSG_00040 and FGSG_11657) or enzymatic functions (FGSG_00044 and FGSG_00045). The final C-domain of GRA1 does not possess the expected sequence of a termination CT domain, often implicated in macrocyclization and release of a cyclopeptidein fungal NRPs; and the thioesterase FGSG_00047 may act in concert with the terminal C-domain of GRA1 to catalyze the formation of the macrocyclic anhydride and release of the products. In Gibberella zeae (strain ATCC MYA-4620 / CBS 123657 / FGSC 9075 / NRRL 31084 / PH-1) (Wheat head blight fungus), this protein is Thioredoxin reductase FGSG_00043.